We begin with the raw amino-acid sequence, 203 residues long: GTP-binding protein ypt1 (203 aa).

Residues 15–23 (GDSGVGKSC), 33–40 (YTESYIST), 63–67 (DTAGQ), 121–124 (NKSD), and 151–153 (SAK) contribute to the GTP site. An Effector region motif is present at residues 37 to 45 (YISTIGVDF). Residues 180–203 (NNTKASVNVSPGHGVSNNSSGGCC) form a disordered region. Residues cysteine 202 and cysteine 203 are each lipidated (S-geranylgeranyl cysteine).

Belongs to the small GTPase superfamily. Rab family.

The protein resides in the endoplasmic reticulum membrane. It is found in the golgi apparatus membrane. The protein localises to the cytoplasm. Its subcellular location is the preautophagosomal structure membrane. Rab activation is generally mediated by a guanine exchange factor (GEF), while inactivation through hydrolysis of bound GTP is catalyzed by a GTPase activating protein (GAP). Its function is as follows. The small GTPases Rab are key regulators of intracellular membrane trafficking, from the formation of transport vesicles to their fusion with membranes. Rabs cycle between an inactive GDP-bound form and an active GTP-bound form that is able to recruit to membranes different set of downstream effectors directly responsible for vesicle formation, movement, tethering and fusion. Ypt-1 regulates the trafficking of secretory vesicles from the endoplasmic reticulum (ER) to the Golgi. Plays a role in the initial events of the autophagic vacuole development which take place at specialized regions of the endoplasmic reticulum. Also involved in the recycling of membrane proteins. The sequence is that of GTP-binding protein ypt1 (ypt-1) from Neurospora crassa (strain ATCC 24698 / 74-OR23-1A / CBS 708.71 / DSM 1257 / FGSC 987).